Reading from the N-terminus, the 874-residue chain is Alanine--tRNA ligase (874 aa).

Zn(2+)-binding residues include His562, His566, Cys664, and His668.

This sequence belongs to the class-II aminoacyl-tRNA synthetase family. The cofactor is Zn(2+).

The protein resides in the cytoplasm. It carries out the reaction tRNA(Ala) + L-alanine + ATP = L-alanyl-tRNA(Ala) + AMP + diphosphate. Functionally, catalyzes the attachment of alanine to tRNA(Ala) in a two-step reaction: alanine is first activated by ATP to form Ala-AMP and then transferred to the acceptor end of tRNA(Ala). Also edits incorrectly charged Ser-tRNA(Ala) and Gly-tRNA(Ala) via its editing domain. This Shewanella baltica (strain OS155 / ATCC BAA-1091) protein is Alanine--tRNA ligase.